The following is a 206-amino-acid chain: Guanylate kinase (206 aa).

The region spanning 6–184 (GNLFILSAPS…ALTDIETIVM (179 aa)) is the Guanylate kinase-like domain. Position 13-20 (13-20 (APSGAGKS)) interacts with ATP.

This sequence belongs to the guanylate kinase family.

It localises to the cytoplasm. It catalyses the reaction GMP + ATP = GDP + ADP. In terms of biological role, essential for recycling GMP and indirectly, cGMP. The sequence is that of Guanylate kinase from Pseudoalteromonas translucida (strain TAC 125).